We begin with the raw amino-acid sequence, 1286 residues long: Lysine-specific demethylase JMJ705 (1286 aa).

In terms of domain architecture, JmjN spans 25-66 (APEFRPTAAEFADPVSYILKIEPAAAPYGICKVVPPLPPPPK). The interval 82 to 105 (PDDRSPSFPTRHQQVGLCPRRTRP) is disordered. Positions 201 to 367 (ETAWNMRGVA…IAKEAAIRRA (167 aa)) constitute a JmjC domain. Fe cation contacts are provided by H244, E246, and H335. The span at 641 to 679 (PNSSNNVGCVGTKLSSSSTERQERPSSQNAHCNGSSVIS) shows a compositional bias: polar residues. Disordered regions lie at residues 641-686 (PNSS…KGVR), 1013-1060 (AEPV…HSQE), and 1077-1164 (PAGT…PKQA). The span at 1119–1136 (HASGQKSNVQEANANSAS) shows a compositional bias: polar residues. A C2H2-type 1; degenerate zinc finger spans residues 1167–1189 (YSCDIEGCSMSFRTKRDLSLHKS). 3 C2H2-type zinc fingers span residues 1190 to 1214 (DICP…RKVH), 1220 to 1244 (LTCP…LRVH), and 1250 to 1276 (YVCH…KTGH).

Fe(2+) serves as cofactor. As to expression, expressed in leaves and flag leaves. Expressed at low levels in roots, shoots, stems and panicles.

It is found in the nucleus. The catalysed reaction is N(6),N(6),N(6)-trimethyl-L-lysyl(27)-[histone H3] + 2 2-oxoglutarate + 2 O2 = N(6)-methyl-L-lysyl(27)-[histone H3] + 2 formaldehyde + 2 succinate + 2 CO2. Its function is as follows. Histone demethylase that demethylates 'Lys-27' (H3K27me) of histone H3 with a specific activity for H3K27me3 and H3K27me2. No activity on H3K4me3, H3K9me3, H3K27me1 and H3K36me3. Involved in biotic stress response. May demethylate H3K27me3-marked defense-related genes and increase their basal and induced expression levels during pathogen infection. In Oryza sativa subsp. japonica (Rice), this protein is Lysine-specific demethylase JMJ705 (JMJ705).